We begin with the raw amino-acid sequence, 21 residues long: Dahlein-5.6 (21 aa).

As to expression, expressed by the skin dorsal glands.

The protein resides in the secreted. In terms of biological role, has no antimicrobial activity. Strongly inhibits the formation of NO by neuronal nitric oxide synthase at micromolar concentrations. In Ranoidea dahlii (Dahl's aquatic frog), this protein is Dahlein-5.6.